Consider the following 185-residue polypeptide: Ribosome-recycling factor (185 aa).

This sequence belongs to the RRF family.

Its subcellular location is the cytoplasm. Functionally, responsible for the release of ribosomes from messenger RNA at the termination of protein biosynthesis. May increase the efficiency of translation by recycling ribosomes from one round of translation to another. This is Ribosome-recycling factor from Vesicomyosocius okutanii subsp. Calyptogena okutanii (strain HA).